Consider the following 697-residue polypeptide: Polyribonucleotide nucleotidyltransferase (697 aa).

Residues Asp-486 and Asp-492 each coordinate Mg(2+). The 60-residue stretch at 553–612 (PRIHTIKIHPDKIKDVIGKCGSVIRALTEETKTIIDIEDDGTVTVAATDSIKAQQAICRI) folds into the KH domain. An S1 motif domain is found at 622-690 (GSIYHGKVTR…RQGRIRLSMK (69 aa)).

Belongs to the polyribonucleotide nucleotidyltransferase family. As to quaternary structure, component of the RNA degradosome, which is a multiprotein complex involved in RNA processing and mRNA degradation. The cofactor is Mg(2+).

The protein localises to the cytoplasm. It catalyses the reaction RNA(n+1) + phosphate = RNA(n) + a ribonucleoside 5'-diphosphate. Its function is as follows. Involved in mRNA degradation. Catalyzes the phosphorolysis of single-stranded polyribonucleotides processively in the 3'- to 5'-direction. This chain is Polyribonucleotide nucleotidyltransferase, found in Baumannia cicadellinicola subsp. Homalodisca coagulata.